The sequence spans 273 residues: Dermonecrotic toxin LhSicTox-alphaIA1i (273 aa).

Residue His5 is part of the active site. Mg(2+)-binding residues include Glu25 and Asp27. Catalysis depends on His41, which acts as the Nucleophile. 2 cysteine pairs are disulfide-bonded: Cys45–Cys51 and Cys47–Cys190. Residue Asp85 coordinates Mg(2+).

It belongs to the arthropod phospholipase D family. Class II subfamily. Mg(2+) serves as cofactor. As to expression, expressed by the venom gland.

It localises to the secreted. The catalysed reaction is an N-(acyl)-sphingosylphosphocholine = an N-(acyl)-sphingosyl-1,3-cyclic phosphate + choline. The enzyme catalyses an N-(acyl)-sphingosylphosphoethanolamine = an N-(acyl)-sphingosyl-1,3-cyclic phosphate + ethanolamine. It carries out the reaction a 1-acyl-sn-glycero-3-phosphocholine = a 1-acyl-sn-glycero-2,3-cyclic phosphate + choline. It catalyses the reaction a 1-acyl-sn-glycero-3-phosphoethanolamine = a 1-acyl-sn-glycero-2,3-cyclic phosphate + ethanolamine. Functionally, dermonecrotic toxins cleave the phosphodiester linkage between the phosphate and headgroup of certain phospholipids (sphingolipid and lysolipid substrates), forming an alcohol (often choline) and a cyclic phosphate. This toxin acts on sphingomyelin (SM). It may also act on ceramide phosphoethanolamine (CPE), lysophosphatidylcholine (LPC) and lysophosphatidylethanolamine (LPE), but not on lysophosphatidylserine (LPS), and lysophosphatidylglycerol (LPG). It acts by transphosphatidylation, releasing exclusively cyclic phosphate products as second products. Induces dermonecrosis, hemolysis, increased vascular permeability, edema, inflammatory response, and platelet aggregation. In Loxosceles hirsuta (Recluse spider), this protein is Dermonecrotic toxin LhSicTox-alphaIA1i.